A 432-amino-acid chain; its full sequence is Homeobox protein Hox-D3 (432 aa).

4 disordered regions span residues 43–62 (YSTP…LDTD), 68–197 (CSIQ…SKRV), 253–280 (QKAK…AGHV), and 400–432 (HHGP…LTHL). Gly residues predominate over residues 97–106 (NSQGGGGGSQ). Pro residues predominate over residues 116-131 (PPQPPPPPPTLPPSSP). The span at 148 to 158 (NASSSSATISK) shows a compositional bias: polar residues. An Antp-type hexapeptide motif is present at residues 160 to 165 (IFPWMK). The homeobox DNA-binding region spans 194–253 (SKRVRTAYTSAQLVELEKEFHFNRYLCRPRRVEMANLLNLTERQIKIWFQNRRMKYKKDQ).

Belongs to the Antp homeobox family.

It is found in the nucleus. Functionally, sequence-specific transcription factor which is part of a developmental regulatory system that provides cells with specific positional identities on the anterior-posterior axis. This Homo sapiens (Human) protein is Homeobox protein Hox-D3 (HOXD3).